The sequence spans 374 residues: Coiled-coil domain-containing protein 89 (374 aa).

The disordered stretch occupies residues M1–E38. T16 bears the Phosphothreonine mark. The segment covering P19–N32 has biased composition (basic and acidic residues). Residues P19 to A350 adopt a coiled-coil conformation.

It belongs to the CCDC89 family. In terms of assembly, interacts with HEY1.

The protein resides in the cytoplasm. Its subcellular location is the nucleus. The sequence is that of Coiled-coil domain-containing protein 89 (CCDC89) from Macaca fascicularis (Crab-eating macaque).